The chain runs to 475 residues: UDP-glycosyltransferase 84A4 (475 aa).

The active-site Proton acceptor is the H20. H20 serves as a coordination point for an anthocyanidin. UDP-alpha-D-glucose is bound by residues Q342, H357, W360, N361, S362, and E365. G380 is an an anthocyanidin binding site. UDP-alpha-D-glucose-binding residues include D381 and Q382.

This sequence belongs to the UDP-glycosyltransferase family.

It carries out the reaction (E)-4-coumarate + UDP-alpha-D-glucose = 4-O-(beta-D-glucosyl)-trans-4-coumarate + UDP + H(+). The enzyme catalyses (E)-ferulate + UDP-alpha-D-glucose = 1-O-[(E)-feruloyl]-beta-D-glucose + UDP. The catalysed reaction is (E)-caffeate + UDP-alpha-D-glucose = 1-O-[(E)-caffeoyl]-beta-D-glucose + UDP. It catalyses the reaction (E)-sinapate + UDP-alpha-D-glucose = 1-O-(trans-sinapoyl)-beta-D-glucose + UDP. It carries out the reaction (E)-cinnamate + UDP-alpha-D-glucose = 1-O-(trans-cinnamoyl)-beta-D-glucose + UDP. Functionally, UDP-glucosyltransferase that forms glucose esters with phenylpropanoids. Glucosylates 4-coumarate, ferulate, caffeate, sinapate and cinnamate. The protein is UDP-glycosyltransferase 84A4 of Arabidopsis thaliana (Mouse-ear cress).